Here is a 594-residue protein sequence, read N- to C-terminus: Elongation factor 4 (594 aa).

A tr-type G domain is found at 2–184 (KNIRNFSIIA…TIVAKVPAPE (183 aa)). GTP-binding positions include 14-19 (DHGKST) and 131-134 (NKID).

This sequence belongs to the TRAFAC class translation factor GTPase superfamily. Classic translation factor GTPase family. LepA subfamily.

The protein localises to the cell inner membrane. It carries out the reaction GTP + H2O = GDP + phosphate + H(+). Required for accurate and efficient protein synthesis under certain stress conditions. May act as a fidelity factor of the translation reaction, by catalyzing a one-codon backward translocation of tRNAs on improperly translocated ribosomes. Back-translocation proceeds from a post-translocation (POST) complex to a pre-translocation (PRE) complex, thus giving elongation factor G a second chance to translocate the tRNAs correctly. Binds to ribosomes in a GTP-dependent manner. The sequence is that of Elongation factor 4 from Francisella tularensis subsp. novicida (strain U112).